We begin with the raw amino-acid sequence, 329 residues long: Malate dehydrogenase (329 aa).

Residue 12 to 18 (GAAGQIG) coordinates NAD(+). Arg93 and Arg99 together coordinate substrate. NAD(+)-binding positions include Asn106, Gln113, and 130–132 (VGN). The substrate site is built by Asn132 and Arg163. Catalysis depends on His188, which acts as the Proton acceptor.

It belongs to the LDH/MDH superfamily. MDH type 2 family.

It carries out the reaction (S)-malate + NAD(+) = oxaloacetate + NADH + H(+). Functionally, catalyzes the reversible oxidation of malate to oxaloacetate. The chain is Malate dehydrogenase from Frankia alni (strain DSM 45986 / CECT 9034 / ACN14a).